We begin with the raw amino-acid sequence, 99 residues long: Aspartyl/glutamyl-tRNA(Asn/Gln) amidotransferase subunit C (99 aa).

The protein belongs to the GatC family. Heterotrimer of A, B and C subunits.

The enzyme catalyses L-glutamyl-tRNA(Gln) + L-glutamine + ATP + H2O = L-glutaminyl-tRNA(Gln) + L-glutamate + ADP + phosphate + H(+). It carries out the reaction L-aspartyl-tRNA(Asn) + L-glutamine + ATP + H2O = L-asparaginyl-tRNA(Asn) + L-glutamate + ADP + phosphate + 2 H(+). Functionally, allows the formation of correctly charged Asn-tRNA(Asn) or Gln-tRNA(Gln) through the transamidation of misacylated Asp-tRNA(Asn) or Glu-tRNA(Gln) in organisms which lack either or both of asparaginyl-tRNA or glutaminyl-tRNA synthetases. The reaction takes place in the presence of glutamine and ATP through an activated phospho-Asp-tRNA(Asn) or phospho-Glu-tRNA(Gln). The protein is Aspartyl/glutamyl-tRNA(Asn/Gln) amidotransferase subunit C of Rhodococcus opacus (strain B4).